Reading from the N-terminus, the 441-residue chain is Glutamyl-tRNA reductase (441 aa).

Substrate-binding positions include 64-67 (TCNR), serine 123, 128-130 (ETQ), and glutamine 134. The Nucleophile role is filled by cysteine 65. 203–208 (GAGEMI) contributes to the NADP(+) binding site.

The protein belongs to the glutamyl-tRNA reductase family. Homodimer.

The enzyme catalyses (S)-4-amino-5-oxopentanoate + tRNA(Glu) + NADP(+) = L-glutamyl-tRNA(Glu) + NADPH + H(+). The protein operates within porphyrin-containing compound metabolism; protoporphyrin-IX biosynthesis; 5-aminolevulinate from L-glutamyl-tRNA(Glu): step 1/2. In terms of biological role, catalyzes the NADPH-dependent reduction of glutamyl-tRNA(Glu) to glutamate 1-semialdehyde (GSA). The sequence is that of Glutamyl-tRNA reductase from Burkholderia pseudomallei (strain K96243).